Consider the following 119-residue polypeptide: Basic phospholipase A2 (119 aa).

Intrachain disulfides connect Cys11/Cys72, Cys27/Cys118, Cys29/Cys45, Cys44/Cys100, Cys51/Cys93, Cys61/Cys86, and Cys79/Cys91. 3 residues coordinate Ca(2+): Tyr28, Gly30, and Gly32. Residue His48 is part of the active site. Residue Asp49 coordinates Ca(2+). Asn82 carries N-linked (GlcNAc...) asparagine glycosylation. Asp94 is an active-site residue.

Belongs to the phospholipase A2 family. Group I subfamily. D49 sub-subfamily. Requires Ca(2+) as cofactor. Expressed by the venom gland.

Its subcellular location is the secreted. The enzyme catalyses a 1,2-diacyl-sn-glycero-3-phosphocholine + H2O = a 1-acyl-sn-glycero-3-phosphocholine + a fatty acid + H(+). In terms of biological role, snake venom phospholipase A2 (PLA2) that shows weak myotoxicity and induces edema in mice. Shows no cytotoxicity in vitro. Has an anticoagulant effect in vitro. PLA2 catalyzes the calcium-dependent hydrolysis of the 2-acyl groups in 3-sn-phosphoglycerides. This chain is Basic phospholipase A2, found in Micrurus mipartitus (Red-tailed coral snake).